The chain runs to 282 residues: ADP-ribosyl cyclase/cyclic ADP-ribose hydrolase (282 aa).

The first 24 residues, 1–24 (MSPVAIVACVCLAVTLTRISPSEA), serve as a signal peptide directing secretion. 5 cysteine pairs are disulfide-bonded: Cys-39–Cys-58, Cys-75–Cys-155, Cys-136–Cys-149, Cys-230–Cys-251, and Cys-263–Cys-272.

This sequence belongs to the ADP-ribosyl cyclase family. Ovotestis.

Its subcellular location is the cytoplasmic vesicle. The enzyme catalyses NAD(+) = cyclic ADP-beta-D-ribose + nicotinamide + H(+). It catalyses the reaction NAD(+) + H2O = ADP-D-ribose + nicotinamide + H(+). The catalysed reaction is nicotinate + NADP(+) = nicotinate-adenine dinucleotide phosphate + nicotinamide. Its activity is regulated as follows. Activity is presumably regulated by its sequestration in vesicles before egg fertilization. After fertilization and upon NADase release, it could then be regulated via its potential phosphorylation sites. Synthesizes cyclic ADP-ribose (cADPR), a second messenger for calcium mobilization from endoplasmic reticulum. Might make the Ca(2+) mobilizer nicotinate-adenine dinucleotide phosphate. Does not have cADPR hydrolase activity. This is ADP-ribosyl cyclase/cyclic ADP-ribose hydrolase from Aplysia kurodai (Kuroda's sea hare).